The sequence spans 55 residues: Large ribosomal subunit protein bL33A (55 aa).

This sequence belongs to the bacterial ribosomal protein bL33 family.

The polypeptide is Large ribosomal subunit protein bL33A (Mycobacterium sp. (strain KMS)).